The following is a 146-amino-acid chain: Nucleoside diphosphate kinase (146 aa).

Positions 11, 59, 87, 93, 104, and 114 each coordinate ATP. Histidine 117 (pros-phosphohistidine intermediate) is an active-site residue.

This sequence belongs to the NDK family. As to quaternary structure, homotetramer. Requires Mg(2+) as cofactor.

The protein resides in the cytoplasm. The enzyme catalyses a 2'-deoxyribonucleoside 5'-diphosphate + ATP = a 2'-deoxyribonucleoside 5'-triphosphate + ADP. It carries out the reaction a ribonucleoside 5'-diphosphate + ATP = a ribonucleoside 5'-triphosphate + ADP. Major role in the synthesis of nucleoside triphosphates other than ATP. The ATP gamma phosphate is transferred to the NDP beta phosphate via a ping-pong mechanism, using a phosphorylated active-site intermediate. This Anaeromyxobacter sp. (strain Fw109-5) protein is Nucleoside diphosphate kinase.